We begin with the raw amino-acid sequence, 310 residues long: Protein-L-isoaspartate O-methyltransferase (310 aa).

Residues 1-41 (MSGERAKRFPLALEDLKRAPRKSEGRPGERQTAGAVPKAAD) form a disordered region. Residues 14–29 (EDLKRAPRKSEGRPGE) show a composition bias toward basic and acidic residues. Ser157 is a catalytic residue.

The protein belongs to the methyltransferase superfamily. L-isoaspartyl/D-aspartyl protein methyltransferase family.

It localises to the cytoplasm. The catalysed reaction is [protein]-L-isoaspartate + S-adenosyl-L-methionine = [protein]-L-isoaspartate alpha-methyl ester + S-adenosyl-L-homocysteine. Its function is as follows. Catalyzes the methyl esterification of L-isoaspartyl residues in peptides and proteins that result from spontaneous decomposition of normal L-aspartyl and L-asparaginyl residues. It plays a role in the repair and/or degradation of damaged proteins. The protein is Protein-L-isoaspartate O-methyltransferase of Burkholderia cenocepacia (strain HI2424).